Reading from the N-terminus, the 479-residue chain is UDP-N-acetylmuramoylalanine--D-glutamate ligase (479 aa).

110 to 116 provides a ligand contact to ATP; it reads GTNGKTS.

Belongs to the MurCDEF family.

Its subcellular location is the cytoplasm. It catalyses the reaction UDP-N-acetyl-alpha-D-muramoyl-L-alanine + D-glutamate + ATP = UDP-N-acetyl-alpha-D-muramoyl-L-alanyl-D-glutamate + ADP + phosphate + H(+). It functions in the pathway cell wall biogenesis; peptidoglycan biosynthesis. In terms of biological role, cell wall formation. Catalyzes the addition of glutamate to the nucleotide precursor UDP-N-acetylmuramoyl-L-alanine (UMA). The sequence is that of UDP-N-acetylmuramoylalanine--D-glutamate ligase from Bifidobacterium adolescentis (strain ATCC 15703 / DSM 20083 / NCTC 11814 / E194a).